Consider the following 520-residue polypeptide: Nonsense-mediated mRNA decay factor SMG9 (520 aa).

The segment at 1 to 143 is disordered; it reads MSESGHSQPG…KGEKEGQRPT (143 aa). Residue Ser2 is modified to N-acetylserine. 5 positions are modified to phosphoserine: Ser2, Ser4, Ser7, Ser32, and Ser53. Basic and acidic residues predominate over residues 36–53; that stretch reads GRERDYIAPWERERRDGS. Composition is skewed to pro residues over residues 78–94 and 122–133; these read QPPP…PAPL and TAPPPPTAPAPP. Ser451 carries the post-translational modification Phosphoserine.

This sequence belongs to the SMG9 family. As to quaternary structure, self-associates to form homodimers and forms heterodimers with SMG8; these assembly forms may represent SMG1C intermediate forms. Component of the SMG1C complex composed of SMG1, SMG8 and SMG9. Interacts with DHX34; the interaction is RNA-independent. Post-translationally, phosphorylated by SMG1.

Its function is as follows. Involved in nonsense-mediated decay (NMD) of mRNAs containing premature stop codons. Is recruited by release factors to stalled ribosomes together with SMG1 and SMG8 (forming the SMG1C protein kinase complex) and, in the SMG1C complex, is required for the efficient association between SMG1 and SMG8. Plays a role in brain, heart, and eye development. This is Nonsense-mediated mRNA decay factor SMG9 from Mus musculus (Mouse).